Here is a 354-residue protein sequence, read N- to C-terminus: Uroporphyrinogen decarboxylase (354 aa).

Substrate-binding positions include 27-31, aspartate 77, tyrosine 154, serine 209, and histidine 327; that span reads RQAGR.

This sequence belongs to the uroporphyrinogen decarboxylase family. As to quaternary structure, homodimer.

It localises to the cytoplasm. The catalysed reaction is uroporphyrinogen III + 4 H(+) = coproporphyrinogen III + 4 CO2. Its pathway is porphyrin-containing compound metabolism; protoporphyrin-IX biosynthesis; coproporphyrinogen-III from 5-aminolevulinate: step 4/4. In terms of biological role, catalyzes the decarboxylation of four acetate groups of uroporphyrinogen-III to yield coproporphyrinogen-III. This Shewanella loihica (strain ATCC BAA-1088 / PV-4) protein is Uroporphyrinogen decarboxylase.